A 154-amino-acid chain; its full sequence is 6,7-dimethyl-8-ribityllumazine synthase (154 aa).

Residues Phe23, 57–59 (AFE), and 81–83 (AVI) each bind 5-amino-6-(D-ribitylamino)uracil. 86–87 (AT) lines the (2S)-2-hydroxy-3-oxobutyl phosphate pocket. His89 serves as the catalytic Proton donor. Phe114 contacts 5-amino-6-(D-ribitylamino)uracil. Arg128 provides a ligand contact to (2S)-2-hydroxy-3-oxobutyl phosphate.

The protein belongs to the DMRL synthase family.

It catalyses the reaction (2S)-2-hydroxy-3-oxobutyl phosphate + 5-amino-6-(D-ribitylamino)uracil = 6,7-dimethyl-8-(1-D-ribityl)lumazine + phosphate + 2 H2O + H(+). The protein operates within cofactor biosynthesis; riboflavin biosynthesis; riboflavin from 2-hydroxy-3-oxobutyl phosphate and 5-amino-6-(D-ribitylamino)uracil: step 1/2. Catalyzes the formation of 6,7-dimethyl-8-ribityllumazine by condensation of 5-amino-6-(D-ribitylamino)uracil with 3,4-dihydroxy-2-butanone 4-phosphate. This is the penultimate step in the biosynthesis of riboflavin. The sequence is that of 6,7-dimethyl-8-ribityllumazine synthase from Nautilia profundicola (strain ATCC BAA-1463 / DSM 18972 / AmH).